The following is a 598-amino-acid chain: Potassium voltage-gated channel subfamily A member 5 (598 aa).

The segment at 1-89 (MEIALGPLEN…EEGEGDPGLS (89 aa)) is disordered. Positions 1-195 (MEIALGPLEN…FYQLGDEAME (195 aa)) are tetramerization domain. Residues 1 to 231 (MEIALGPLEN…LIFEYPESSG (231 aa)) lie on the Cytoplasmic side of the membrane. A compositionally biased stretch (pro residues) spans 60 to 69 (RPLPPQPPEL). Residue K205 forms a Glycyl lysine isopeptide (Lys-Gly) (interchain with G-Cter in SUMO) linkage. Residues 232–253 (SARAIAIVSVLVILISIITFCL) traverse the membrane as a helical segment. Over 254–308 (ETLPEFKDERELLRHPPVPHQPPAAPALGANGSGAVAPASGSTVAPLLPRTLADP) the chain is Extracellular. Residues 309 to 330 (FFIVETTCVIWFTFELLVRFFA) form a helical membrane-spanning segment. C331 is lipidated: S-palmitoyl cysteine. Residues 331–341 (CPSKAEFSRNI) are Cytoplasmic-facing. A helical transmembrane segment spans residues 342-362 (MNIIDIVAIFPYFITLGTELA). Over 363 to 380 (EQQPGGGGGGQNGQQAMS) the chain is Extracellular. The chain crosses the membrane as a helical; Voltage-sensor span at residues 381 to 401 (LAILRVIRLVRVFRIFKLSRH). Over 402–416 (SKGLQILGKTLQASM) the chain is Cytoplasmic. The segment at 403–416 (KGLQILGKTLQASM) is S4-S5 linker. Residues 417–438 (RELGLLIFFLFIGVILFSSAVY) traverse the membrane as a helical segment. The Extracellular segment spans residues 439-452 (FAEADNQGTHFSSI). An intramembrane region (helical) is located at residues 453 to 464 (PDAFWWAVVTMT). Positions 465-470 (TVGYGD) match the Selectivity filter motif. The stretch at 465–472 (TVGYGDMR) is an intramembrane region. A helical membrane pass occupies residues 480–508 (IVGSLCAIAGVLTIALPVPVIVSNFNYFY). Residues 509–598 (HRETDHEEQA…CLDTSRETDL (90 aa)) lie on the Cytoplasmic side of the membrane. Positions 517-539 (QAALKEEPGSQSRGTSLDAGGQR) are disordered. K521 is covalently cross-linked (Glycyl lysine isopeptide (Lys-Gly) (interchain with G-Cter in SUMO)). Positions 596-598 (TDL) match the PDZ-binding motif.

Belongs to the potassium channel family. A (Shaker) (TC 1.A.1.2) subfamily. Kv1.5/KCNA5 sub-subfamily. Homotetramer and heterotetramer of potassium channel proteins. Interacts with DLG1, which enhances channel currents. Forms a ternary complex with DLG1 and CAV3. Interacts with KCNAB1. Interacts with UBE2I. Interacts with XIRP2; the interaction is required for normal action potential configuration in the heart. Post-translationally, glycosylated. Sumoylated on Lys-205, and Lys-521, preferentially with SUMO3. Sumoylation regulates the voltage sensitivity of the channel.

It localises to the cell membrane. It catalyses the reaction K(+)(in) = K(+)(out). Its function is as follows. Voltage-gated potassium channel that mediates transmembrane potassium transport in excitable membranes. Forms tetrameric potassium-selective channels through which potassium ions pass in accordance with their electrochemical gradient. The channel alternates between opened and closed conformations in response to the voltage difference across the membrane. Can form functional homotetrameric channels and heterotetrameric channels that contain variable proportions of KCNA1, KCNA2, KCNA4, KCNA5, and possibly other family members as well; channel properties depend on the type of alpha subunits that are part of the channel. Channel properties are modulated by cytoplasmic beta subunits that regulate the subcellular location of the alpha subunits and promote rapid inactivation. Homotetrameric channels display rapid activation and slow inactivation. Required for normal electrical conduction including formation of the infranodal ventricular conduction system and normal action potential configuration, as a result of its interaction with XIRP2. May play a role in regulating the secretion of insulin in normal pancreatic islets. The sequence is that of Potassium voltage-gated channel subfamily A member 5 (KCNA5) from Oryctolagus cuniculus (Rabbit).